The following is a 258-amino-acid chain: MSETKNELEDLLEKAATEPAHRPAFFRTLLESTVWVPGTAAQGEAVVEDSALDLQHWEKEDGTSVIPFFTSLEALQQAVEDEQAFVVMPVRTLFEMTLGETLFLNAKLPTGKEFMPREISLLIGEEGNPLSSQEILEGGESLILSEVAEPPAQMIDSLTTLFKTIKPVKRAFICSIKENEEAQPNLLIGIEADGDIEEIIQATGSVATDTLPGDEPIDICQVKKGEKGISHFITEHIAPFYERRWGGFLRDFKQNRII.

In terms of biological role, may be involved in the enhancement of serine-sensitivity. This chain is Protein SseB (sseB), found in Escherichia coli (strain K12).